The chain runs to 507 residues: ATP synthase subunit alpha, chloroplastic (507 aa).

An ATP-binding site is contributed by 170–177; the sequence is GDRQTGKT.

This sequence belongs to the ATPase alpha/beta chains family. F-type ATPases have 2 components, CF(1) - the catalytic core - and CF(0) - the membrane proton channel. CF(1) has five subunits: alpha(3), beta(3), gamma(1), delta(1), epsilon(1). CF(0) has four main subunits: a, b, b' and c.

It is found in the plastid. The protein resides in the chloroplast thylakoid membrane. It catalyses the reaction ATP + H2O + 4 H(+)(in) = ADP + phosphate + 5 H(+)(out). Produces ATP from ADP in the presence of a proton gradient across the membrane. The alpha chain is a regulatory subunit. The sequence is that of ATP synthase subunit alpha, chloroplastic from Illicium oligandrum (Star anise).